A 187-amino-acid polypeptide reads, in one-letter code: UPF0301 protein CT0663 (187 aa).

Belongs to the UPF0301 (AlgH) family.

The polypeptide is UPF0301 protein CT0663 (Chlorobaculum tepidum (strain ATCC 49652 / DSM 12025 / NBRC 103806 / TLS) (Chlorobium tepidum)).